Consider the following 189-residue polypeptide: Elongation factor P (189 aa).

Belongs to the elongation factor P family.

Its subcellular location is the cytoplasm. It functions in the pathway protein biosynthesis; polypeptide chain elongation. In terms of biological role, involved in peptide bond synthesis. Stimulates efficient translation and peptide-bond synthesis on native or reconstituted 70S ribosomes in vitro. Probably functions indirectly by altering the affinity of the ribosome for aminoacyl-tRNA, thus increasing their reactivity as acceptors for peptidyl transferase. This is Elongation factor P from Pseudomonas syringae pv. syringae (strain B728a).